The sequence spans 623 residues: Pentatricopeptide repeat-containing protein At5g15340, mitochondrial (623 aa).

The N-terminal 16 residues, 1–16 (MKCLSYQKVRLLLRHC), are a transit peptide targeting the mitochondrion. 11 PPR repeats span residues 42 to 72 (RSYL…IPLS), 75 to 109 (DNVD…RVEI), 110 to 144 (DDVS…GVLT), 145 to 179 (SVKV…SVVS), 180 to 206 (WTVV…MPER), 207 to 237 (NAVA…MVFR), 243 to 277 (NFVT…EMMM), 285 to 319 (DVMV…NVVT), 320 to 346 (WNAL…MIRE), 350 to 384 (DDLT…GLEP), and 385 to 419 (KVDH…PNEV). The type E motif stretch occupies residues 420–495 (VLGSLLGSCS…IPGLSSIYVN (76 aa)). The segment at 496–526 (DSVHRFSSGDRSHPRTKEIYLKLNEVIERIR) is type E(+) motif. The interval 527 to 623 (SAGYVPDVSG…GGSCSCSDYW (97 aa)) is type DYW motif.

The protein belongs to the PPR family. PCMP-H subfamily.

The protein resides in the mitochondrion. The sequence is that of Pentatricopeptide repeat-containing protein At5g15340, mitochondrial (PCMP-H91) from Arabidopsis thaliana (Mouse-ear cress).